Here is a 274-residue protein sequence, read N- to C-terminus: NAD kinase (274 aa).

D50 acts as the Proton acceptor in catalysis. NAD(+) contacts are provided by residues 50–51 (DG), 126–127 (NE), R152, D154, 165–170 (TAYNKS), and A189.

The protein belongs to the NAD kinase family. The cofactor is a divalent metal cation.

It localises to the cytoplasm. The catalysed reaction is NAD(+) + ATP = ADP + NADP(+) + H(+). Functionally, involved in the regulation of the intracellular balance of NAD and NADP, and is a key enzyme in the biosynthesis of NADP. Catalyzes specifically the phosphorylation on 2'-hydroxyl of the adenosine moiety of NAD to yield NADP. The protein is NAD kinase of Streptococcus gordonii (strain Challis / ATCC 35105 / BCRC 15272 / CH1 / DL1 / V288).